The chain runs to 191 residues: uncharacterized protein (191 aa).

The N-terminal stretch at 1–17 (MESIILSIAIFIGVLLG) is a signal peptide. Residues 82–148 (TFSGSRTSPD…DVGAGSGSSI (67 aa)) form a disordered region. Residues 168-188 (VAVLITAAILSAPVTAIALLE) traverse the membrane as a helical segment.

The protein localises to the membrane. This is an uncharacterized protein from Saccharomyces cerevisiae (strain ATCC 204508 / S288c) (Baker's yeast).